We begin with the raw amino-acid sequence, 545 residues long: Coiled-coil domain-containing protein 60 (545 aa).

Residues 72–99 (NILREENAMKKKQQLLQKLKEEELNKFQ) adopt a coiled-coil conformation. The tract at residues 224–284 (PAIRTAMASR…DNESSSTKPE (61 aa)) is disordered. The segment covering 238-259 (RGSTLSLTRTSGGSSPQSSMMS) has biased composition (low complexity).

This is Coiled-coil domain-containing protein 60 (Ccdc60) from Mus musculus (Mouse).